The following is a 360-amino-acid chain: uncharacterized protein (360 aa).

The segment at 1–33 (MSGRRKGCSAATASSSSSSPPSRLPPLPGHARR) is disordered.

This sequence belongs to the herpesviridae US22 family.

This is an uncharacterized protein from Human cytomegalovirus (strain AD169) (HHV-5).